The sequence spans 749 residues: Protein lin-54 homolog (749 aa).

Residue lysine 139 forms a Glycyl lysine isopeptide (Lys-Gly) (interchain with G-Cter in SUMO2) linkage. 2 positions are modified to N6-acetyllysine: lysine 244 and lysine 249. Residues serine 264, serine 282, serine 310, and serine 314 each carry the phosphoserine modification. A Glycyl lysine isopeptide (Lys-Gly) (interchain with G-Cter in SUMO2) cross-link involves residue lysine 357. The disordered stretch occupies residues 369 to 388; sequence ASSSTQPVSQNPSTNTQPLQ. Residues 521-634 form the CRC domain; sequence PRKPCNCTKS…KCIGCKNFEE (114 aa). The interval 523–536 is DNA-binding; sequence KPCNCTKSLCLKLY. 9 residues coordinate Zn(2+): cysteine 525, cysteine 527, cysteine 532, cysteine 537, cysteine 539, cysteine 546, cysteine 549, cysteine 551, and cysteine 554. The linker stretch occupies residues 583–596; the sequence is IGKGKEGESDRRHS. Cysteine 599, cysteine 601, cysteine 606, cysteine 611, cysteine 613, cysteine 620, cysteine 624, cysteine 626, and cysteine 629 together coordinate Zn(2+). A DNA-binding region spans residues 599-612; the sequence is CNCKRSGCLKNYCE. Serine 635 is subject to Phosphoserine. Residues lysine 639, lysine 659, and lysine 661 each participate in a glycyl lysine isopeptide (Lys-Gly) (interchain with G-Cter in SUMO2) cross-link.

This sequence belongs to the lin-54 family. In terms of assembly, component of the DREAM complex (also named LINC complex) at least composed of E2F4, E2F5, LIN9, LIN37, LIN52, LIN54, MYBL1, MYBL2, RBL1, RBL2, RBBP4, TFDP1 and TFDP2. The complex exists in quiescent cells where it represses cell cycle-dependent genes. It dissociates in S phase when LIN9, LIN37, LIN52 and LIN54 form a subcomplex that binds to MYBL2.

The protein localises to the nucleus. Component of the DREAM complex, a multiprotein complex that can both act as a transcription activator or repressor depending on the context. In G0 phase, the complex binds to more than 800 promoters and is required for repression of E2F target genes. In S phase, the complex selectively binds to the promoters of G2/M genes whose products are required for mitosis and participates in their cell cycle dependent activation. In the complex, acts as a DNA-binding protein that binds the promoter of CDK1 in a sequence-specific manner. Specifically recognizes the consensus motif 5'-TTYRAA-3' in target DNA. In Homo sapiens (Human), this protein is Protein lin-54 homolog (LIN54).